We begin with the raw amino-acid sequence, 543 residues long: 2,3-bisphosphoglycerate-independent phosphoglycerate mutase (543 aa).

Residues D24 and S74 each contribute to the Mn(2+) site. Catalysis depends on S74, which acts as the Phosphoserine intermediate. Residues H135, R165 to D166, R197, R203, R268 to R271, and K341 each bind substrate. 5 residues coordinate Mn(2+): D408, H412, D449, H450, and H467.

This sequence belongs to the BPG-independent phosphoglycerate mutase family. As to quaternary structure, monomer. Mn(2+) serves as cofactor.

It catalyses the reaction (2R)-2-phosphoglycerate = (2R)-3-phosphoglycerate. It functions in the pathway carbohydrate degradation; glycolysis; pyruvate from D-glyceraldehyde 3-phosphate: step 3/5. Its function is as follows. Catalyzes the interconversion of 2-phosphoglycerate and 3-phosphoglycerate. This chain is 2,3-bisphosphoglycerate-independent phosphoglycerate mutase, found in Parasynechococcus marenigrum (strain WH8102).